A 410-amino-acid chain; its full sequence is Mating-type locus allele B4 protein (410 aa).

A variable domain between B alleles region spans residues 1–110 (MSSDPKISIT…ANASSPVVGC (110 aa)). Positions 107–184 (VVGCRELSED…NARRRSGWSH (78 aa)) form a DNA-binding region, homeobox; TALE-type. The interval 111-410 (RELSEDLPAY…PFLCLSVAFV (300 aa)) is highly conserved between B alleles. Disordered stretches follow at residues 202–241 (RAKL…TPAD), 278–335 (TPKP…TPEL), and 375–394 (RGNR…QPDE). A compositionally biased stretch (low complexity) spans 206-222 (SSSNQSTPPSPTSEYPS). Positions 276–308 (KKTPKPGMPRPVTTVAKRQPARKTKPAAKPKSR) match the Nuclear localization signal motif. The span at 294 to 307 (QPARKTKPAAKPKS) shows a compositional bias: basic residues. The segment covering 312–335 (PRASTTPSIDSTLDSSKLESTPEL) has biased composition (polar residues). Residues 333–410 (PELSMCSTAD…PFLCLSVAFV (78 aa)) form a not essential for B4 function region. Positions 375 to 388 (RGNRKVKALPKRAG) are enriched in basic residues.

It belongs to the TALE/M-ATYP homeobox family.

It localises to the nucleus. In terms of biological role, the B locus has at least 25 alleles, and any combination of two different B alleles yields a multimeric regulatory protein, that activates genes responsible for the pathogenicity and for the sexual development of the fungus within the corn plant. The protein is Mating-type locus allele B4 protein of Mycosarcoma maydis (Corn smut fungus).